Here is a 363-residue protein sequence, read N- to C-terminus: Ribonuclease P protein subunit p40 (363 aa).

As to quaternary structure, component of nuclear RNase P and RNase MRP ribonucleoproteins. RNase P consists of a catalytic RNA moiety and about 10 protein subunits; POP1, POP4, POP5, POP7, RPP14, RPP21, RPP25, RPP30, RPP38 and RPP40. Within the RNase P complex, POP1, POP7 and RPP25 form the 'finger' subcomplex, POP5, RPP14, RPP40 and homodimeric RPP30 form the 'palm' subcomplex, and RPP21, POP4 and RPP38 form the 'wrist' subcomplex. All subunits of the RNase P complex interact with the catalytic RNA. Several subunits of RNase P are also part of the RNase MRP complex. RNase MRP consists of a catalytic RNA moiety and about 8 protein subunits; POP1, POP7, RPP25, RPP30, RPP38, RPP40 and possibly also POP4 and POP5.

The protein resides in the nucleus. It localises to the nucleolus. Its function is as follows. Component of ribonuclease P, a ribonucleoprotein complex that generates mature tRNA molecules by cleaving their 5'-ends. Also a component of the MRP ribonuclease complex, which cleaves pre-rRNA sequences. This is Ribonuclease P protein subunit p40 (RPP40) from Homo sapiens (Human).